Reading from the N-terminus, the 657-residue chain is MMYQNICIMIIMLPLASSIINGLFLRVIDKKLAQVIATGFLSLSALFSLIIFCDTGLDGNIIHIKLLPWIEVGTFKVNWSIYIDQLTSIMFIAVTWVSSIVHIYSLGYMAEDKGIIRFLSFLSLFTFFMLMLVSSDNFLQLFFGWEGVGVCSYLLIGFWYSKESANKAAIKAFIINRASDFAFILGVITIIVYCGSANYKDVLSSAELLSNIKIFLHFSILDIICLLLFIGCMGKSAQIGLHVWLPDAMEGPTPVSALIHAATMVTAGVFLVARCSYLFEYSPLILQFITIIGGVTCLFAASIAIMHSDIKKIIAYSTCSQLGYMFMACGVSAYNSGIFHLVTHAFFKALLFLSAGSVIHAVHEQDIFKMGDLRNKMPVTYGNFLIGSLALIGIYPLAGFYSKDSILEAAYSSGSFMFIFGIAAAILTAIYSMKIIMLVFHGKTKLEKDVFEHAHEPAKVMNNPLILLVVGSFFSGMIGYYLLAMDKPNGYFHASLFNLHIYKLLISHPPLYIKLLPMAVGIVGIVTGIYLYKSSTVMSFPQKRKSSKNIKNAWILRSSRGMTPLVLISNILRNKYYFDEIYNCLIVKPINCLASLFYLGDQQIIDRFGPNGFSRVVNCFSVLTGKIQTGYVFNYALYIVSFIVVTISYFVWKNIMY.

17 helical membrane-spanning segments follow: residues 5-25 (NICI…GLFL), 32-52 (LAQV…LIIF), 89-109 (IMFI…LGYM), 114-134 (GIIR…MLVS), 138-158 (FLQL…LIGF), 172-192 (AFII…TIIV), 214-234 (IFLH…GCMG), 253-273 (TPVS…FLVA), 285-305 (ILQF…SIAI), 313-333 (IIAY…GVSA), 339-359 (FHLV…GSVI), 381-401 (YGNF…AGFY), 416-436 (FMFI…MKII), 465-485 (LILL…LLAM), 511-531 (LYIK…GIYL), 580-600 (EIYN…FYLG), and 632-652 (VFNY…YFVW).

This sequence belongs to the complex I subunit 5 family.

The protein localises to the cell membrane. It catalyses the reaction a quinone + NADH + 5 H(+)(in) = a quinol + NAD(+) + 4 H(+)(out). Functionally, NDH-1 shuttles electrons from NADH, via FMN and iron-sulfur (Fe-S) centers, to quinones in the respiratory chain. Couples the redox reaction to proton translocation (for every two electrons transferred, four hydrogen ions are translocated across the cytoplasmic membrane), and thus conserves the redox energy in a proton gradient. This is NADH-quinone oxidoreductase subunit L (nuoL) from Rickettsia conorii (strain ATCC VR-613 / Malish 7).